Here is a 448-residue protein sequence, read N- to C-terminus: Argininosuccinate synthase (448 aa).

Residues 17–25 and Ala43 contribute to the ATP site; that span reads AFSGGLDTS. Tyr99 is an L-citrulline binding site. Residues Gly129 and Thr131 each contribute to the ATP site. Positions 131, 135, and 136 each coordinate L-aspartate. Asn135 provides a ligand contact to L-citrulline. Residue Asp136 coordinates ATP. L-citrulline-binding residues include Arg139 and Ser192. Asp194 contributes to the ATP binding site. Residues Thr201, Glu203, and Glu280 each coordinate L-citrulline.

The protein belongs to the argininosuccinate synthase family. Type 2 subfamily. As to quaternary structure, homotetramer.

Its subcellular location is the cytoplasm. The enzyme catalyses L-citrulline + L-aspartate + ATP = 2-(N(omega)-L-arginino)succinate + AMP + diphosphate + H(+). Its pathway is amino-acid biosynthesis; L-arginine biosynthesis; L-arginine from L-ornithine and carbamoyl phosphate: step 2/3. This is Argininosuccinate synthase from Bradyrhizobium sp. (strain ORS 278).